Consider the following 148-residue polypeptide: 3-dehydroquinate dehydratase (148 aa).

The Proton acceptor role is filled by Tyr-24. Positions 80, 86, and 93 each coordinate substrate. The active-site Proton donor is His-106. Substrate contacts are provided by residues 107-108 (IS) and Arg-117.

This sequence belongs to the type-II 3-dehydroquinase family. Homododecamer.

It carries out the reaction 3-dehydroquinate = 3-dehydroshikimate + H2O. It functions in the pathway metabolic intermediate biosynthesis; chorismate biosynthesis; chorismate from D-erythrose 4-phosphate and phosphoenolpyruvate: step 3/7. Its function is as follows. Catalyzes a trans-dehydration via an enolate intermediate. The sequence is that of 3-dehydroquinate dehydratase from Acidovorax sp. (strain JS42).